A 132-amino-acid chain; its full sequence is Interleukin-5 (132 aa).

An N-terminal signal peptide occupies residues 1 to 19 (MRMLLCLNVLTLSCVWAIA). N-linked (GlcNAc...) asparagine glycans are attached at residues N45, N74, and N88.

This sequence belongs to the IL-5 family. In terms of assembly, homodimer; disulfide-linked. Interacts with IL5RA. Interacts with CSF2RB.

It is found in the secreted. Its function is as follows. Homodimeric cytokine expressed predominantly by T-lymphocytes and NK cells that plays an important role in the survival, differentiation, and chemotaxis of eosinophils. Acts also on activated and resting B-cells to induce immunoglobulin production, growth, and differentiation. Mechanistically, exerts its biological effects through a receptor composed of IL5RA subunit and the cytokine receptor common subunit beta/CSF2RB. Binding to the receptor leads to activation of various kinases including LYN, SYK and JAK2 and thereby propagates signals through the RAS-MAPK and JAK-STAT5 pathways respectively. In Rattus norvegicus (Rat), this protein is Interleukin-5 (Il5).